Consider the following 61-residue polypeptide: Large ribosomal subunit protein uL30 (61 aa).

Belongs to the universal ribosomal protein uL30 family. Part of the 50S ribosomal subunit.

This is Large ribosomal subunit protein uL30 from Corynebacterium urealyticum (strain ATCC 43042 / DSM 7109).